Reading from the N-terminus, the 305-residue chain is Aspartate carbamoyltransferase catalytic subunit (305 aa).

Carbamoyl phosphate is bound by residues arginine 54 and threonine 55. Lysine 82 is an L-aspartate binding site. Residues arginine 104, histidine 132, and glutamine 135 each coordinate carbamoyl phosphate. Residues arginine 165 and arginine 218 each coordinate L-aspartate. Residues glycine 259 and proline 260 each contribute to the carbamoyl phosphate site.

Belongs to the aspartate/ornithine carbamoyltransferase superfamily. ATCase family. As to quaternary structure, heterododecamer (2C3:3R2) of six catalytic PyrB chains organized as two trimers (C3), and six regulatory PyrI chains organized as three dimers (R2).

It carries out the reaction carbamoyl phosphate + L-aspartate = N-carbamoyl-L-aspartate + phosphate + H(+). It functions in the pathway pyrimidine metabolism; UMP biosynthesis via de novo pathway; (S)-dihydroorotate from bicarbonate: step 2/3. In terms of biological role, catalyzes the condensation of carbamoyl phosphate and aspartate to form carbamoyl aspartate and inorganic phosphate, the committed step in the de novo pyrimidine nucleotide biosynthesis pathway. This chain is Aspartate carbamoyltransferase catalytic subunit, found in Caldicellulosiruptor bescii (strain ATCC BAA-1888 / DSM 6725 / KCTC 15123 / Z-1320) (Anaerocellum thermophilum).